A 123-amino-acid chain; its full sequence is uncharacterized protein (123 aa).

This is an uncharacterized protein from Human cytomegalovirus (strain AD169) (HHV-5).